We begin with the raw amino-acid sequence, 979 residues long: Protein argonaute PNH1 (979 aa).

The disordered stretch occupies residues 1-95; the sequence is MLEVLDMAPP…GGRAGAGPGP (95 aa). Residues 54–67 are compositionally biased toward low complexity; it reads AETAAATAAVAPPE. The segment covering 77-86 has biased composition (basic residues); it reads GRRRGGRGRG. One can recognise a PAZ domain in the interval 333–446; it reads PVIEFVAQIL…LPMEACKIVE (114 aa). The Piwi domain occupies 620–941; the sequence is LLLAILPDNN…AAFRARFYME (322 aa).

The protein belongs to the argonaute family. Ago subfamily.

Its subcellular location is the cytoplasm. Functionally, probably involved in the RNA silencing pathway. May bind to short RNAs such as microRNAs (miRNAs) or short interfering RNAs (siRNAs), and represses the translation of mRNAs which are complementary to them. Plays a role in the maintenance of the indeterminate state of the stem cells in the shoot apical meristem (SAM). Regulates leaf formation through vascular development and may be involved in determining the central domain of the leaf founder region. This chain is Protein argonaute PNH1 (PHN1), found in Oryza sativa subsp. japonica (Rice).